Consider the following 216-residue polypeptide: Kynurenine formamidase (216 aa).

Phe-21 contributes to the substrate binding site. Residues His-51, His-55, and Asp-57 each contribute to the Zn(2+) site. His-61 functions as the Proton donor/acceptor in the catalytic mechanism. Zn(2+) is bound by residues His-167 and Glu-179.

It belongs to the Cyclase 1 superfamily. KynB family. Homodimer. Zn(2+) serves as cofactor.

It carries out the reaction N-formyl-L-kynurenine + H2O = L-kynurenine + formate + H(+). It participates in amino-acid degradation; L-tryptophan degradation via kynurenine pathway; L-kynurenine from L-tryptophan: step 2/2. Catalyzes the hydrolysis of N-formyl-L-kynurenine to L-kynurenine, the second step in the kynurenine pathway of tryptophan degradation. The protein is Kynurenine formamidase of Paracidovorax citrulli (strain AAC00-1) (Acidovorax citrulli).